Reading from the N-terminus, the 344-residue chain is Anamorsin homolog 1 (344 aa).

Residues 1–169 (MANNVGVLLA…DTGSVFQIRK (169 aa)) form an N-terminal SAM-like domain region. A linker region spans residues 170–233 (KVSNQNGNFR…EDDLLTEEDL (64 aa)). [2Fe-2S] cluster is bound by residues Cys-244, Cys-251, Cys-254, and Cys-256. Positions 244 to 256 (CAPTKKACKNCTC) are fe-S binding site A. Cys-282, Cys-285, Cys-293, and Cys-296 together coordinate [4Fe-4S] cluster. Short sequence motifs (cx2C motif) lie at residues 282 to 285 (CGSC) and 293 to 296 (CAGC). Positions 282–296 (CGSCGLGDAFRCAGC) are fe-S binding site B.

This sequence belongs to the anamorsin family. In terms of assembly, monomer. The cofactor is [2Fe-2S] cluster. [4Fe-4S] cluster is required as a cofactor.

The protein resides in the cytoplasm. Its subcellular location is the mitochondrion intermembrane space. Component of the cytosolic iron-sulfur (Fe-S) protein assembly (CIA) machinery. Required for the maturation of extramitochondrial Fe-S proteins. Part of an electron transfer chain functioning in an early step of cytosolic Fe-S biogenesis, facilitating the de novo assembly of a [4Fe-4S] cluster on the cytosolic Fe-S scaffold complex. Electrons are transferred from NADPH via a FAD- and FMN-containing diflavin oxidoreductase. Together with the diflavin oxidoreductase, also required for the assembly of the diferric tyrosyl radical cofactor of ribonucleotide reductase (RNR), probably by providing electrons for reduction during radical cofactor maturation in the catalytic small subunit. The chain is Anamorsin homolog 1 from Physcomitrium patens (Spreading-leaved earth moss).